Consider the following 245-residue polypeptide: tRNA (guanine-N(1)-)-methyltransferase (245 aa).

Residues G112 and 132-137 (IGDFVL) each bind S-adenosyl-L-methionine.

Belongs to the RNA methyltransferase TrmD family. Homodimer.

It is found in the cytoplasm. The catalysed reaction is guanosine(37) in tRNA + S-adenosyl-L-methionine = N(1)-methylguanosine(37) in tRNA + S-adenosyl-L-homocysteine + H(+). In terms of biological role, specifically methylates guanosine-37 in various tRNAs. In Geobacter metallireducens (strain ATCC 53774 / DSM 7210 / GS-15), this protein is tRNA (guanine-N(1)-)-methyltransferase.